A 163-amino-acid polypeptide reads, in one-letter code: Transcriptional repressor NrdR (163 aa).

The segment at 3–34 (CPFCAYADTRVVDSRLADDGGSVRRRRECPQC) is a zinc-finger region. Positions 49–139 (PVVVKTDGRR…VYRRFEDVDA (91 aa)) constitute an ATP-cone domain.

It belongs to the NrdR family. The cofactor is Zn(2+).

Negatively regulates transcription of bacterial ribonucleotide reductase nrd genes and operons by binding to NrdR-boxes. In Acidithiobacillus ferrooxidans (strain ATCC 23270 / DSM 14882 / CIP 104768 / NCIMB 8455) (Ferrobacillus ferrooxidans (strain ATCC 23270)), this protein is Transcriptional repressor NrdR.